A 496-amino-acid polypeptide reads, in one-letter code: MKSTVASALLVLAGTAVQAQSGPWQQCGGIGWQGPFTCVSGHTCQVLNDWYHQCVPGGGPSPPPTSPPPTTPPPTSPPPTSPPPTSPPPTSPPPTSPPPTSPPPTSPPPTSPPPTSPPPTSPPPSSGSCPSTPGGLGSGNQRLPDPFTFHNGNTVTSAADFQCRQREVSSLIQQYELGQFPAPPQSVTSSYSGNTLSITVSDQGRSISFSVSISGGSGSKSPAIIAYGAPSIPVPNGVATIRFNNDDIAAQQSGSSRGQGKFYNLYGSGHSAGAMTAWAWGVARIIDALEKTPAAGIDPTRVGVTGCSRNGKGAMVAGALEPRIALTIPQESGSGGSACWRISNWQGQQGQNVQTPAQIITENVWLGPVFNNHANNVNALPFDHHQLAGLIAPRALYVIENSDMEWLGWTATYGCMAAARTQWEALGALDNFGFSQVGGNQHCSFNSGKQSAELNAFINKFLLQSGGGTTSILRTERNHGSFNLAEWTPWNVPNLR.

Residues 1-19 form the signal peptide; it reads MKSTVASALLVLAGTAVQA. The 36-residue stretch at 20-55 folds into the CBM1 domain; the sequence is QSGPWQQCGGIGWQGPFTCVSGHTCQVLNDWYHQCV. The segment at 57 to 151 is disordered; that stretch reads GGGPSPPPTS…RLPDPFTFHN (95 aa). Over residues 59–125 the composition is skewed to pro residues; the sequence is GPSPPPTSPP…SPPPTSPPPS (67 aa). 3 disulfides stabilise this stretch: Cys-129/Cys-163, Cys-307/Cys-443, and Cys-339/Cys-415. The short motif at 306–311 is the GXSYXG catalytic site motif element; sequence GCSRNG. The active-site Nucleophile is Ser-308. Residues Lys-312, Gln-354, Glu-362, and Trp-406 each coordinate substrate. His-442 functions as the Proton donor/acceptor in the catalytic mechanism.

It belongs to the carbohydrate esterase 15 (CE15) family.

It is found in the secreted. It carries out the reaction a 4-O-methyl-alpha-D-glucuronosyl ester derivative + H2O = 4-O-methyl-alpha-D-glucuronate derivative + an alcohol + H(+). Its function is as follows. Glucuronoyl esterase which may play a significant role in biomass degradation, as it is considered to disconnect hemicellulose from lignin through the hydrolysis of the ester bond between 4-O-methyl-D-glucuronic acid residues of glucuronoxylans and aromatic alcohols of lignin. Cleaves native lignin-carbohydrate (LC) ester bonds from LC complex preparations of spruce (softwood) and birch (hardwood), containing mainly hemicelluloses with partially acetylated glucomannans in spruce and partially acetylated xylan in birch. Can hydrolyze benzyl glucuronic acid (BnGlcA), allyl glucuronic acid (allylGlcA) and to a lower degree methyl glucuronic acid (MeGlcA) in vitro. This Sodiomyces alcalophilus (Acremonium alcalophilum) protein is 4-O-methyl-glucuronoyl methylesterase 1.